A 426-amino-acid polypeptide reads, in one-letter code: MTSSHRLLLENAQQVVLVCARGERFLTGSALRSLAVLEGASVVVGTDGLIKAVGPAAVIQKQFSGETFEERIDCSGKCVLPGLVDAHTHPVWAGERVHEFAMKLAGATYMDIHQAGGGINFTVEHTRQASEEELFCSFQQRLQCMMRAGTTLVECKSGYGLNLETELKMLRVIERARRELHLSLSATYCGAHSVPKGKTAVEAADDIISHHLPRLKELSRNGDLHVDNIDVFCEKGVFDLDTTRRILEGGKKMGLQINFHGDELHPMKAAELGAELGAQAISHLEEVSDEGIAAMAAARCSAVLLPTTAYMLRLKQPRARKMLDEGVIVALGSDFNPNAYCFSMPMVMHLACVNMRMSMPEALAAATINAAYALGKSHTHGSLEVGKQGDAIIINASRWEHLIYQFGGHHELIDYVITKGKVIYKK.

4-imidazolone-5-propanoate contacts are provided by tyrosine 159 and histidine 192. Position 159 (tyrosine 159) interacts with N-formimidoyl-L-glutamate. Histidine 260 is a binding site for Fe(3+). Histidine 260 is a Zn(2+) binding site. Residue glutamate 263 participates in 4-imidazolone-5-propanoate binding. Position 334 (aspartate 334) interacts with Fe(3+). Residue aspartate 334 participates in Zn(2+) binding. An N-formimidoyl-L-glutamate-binding site is contributed by asparagine 336.

Belongs to the metallo-dependent hydrolases superfamily. HutI family. Zn(2+) serves as cofactor. The cofactor is Fe(3+).

The catalysed reaction is 4-imidazolone-5-propanoate + H2O = N-formimidoyl-L-glutamate. The protein operates within amino-acid degradation; L-histidine degradation into L-glutamate; N-formimidoyl-L-glutamate from L-histidine: step 3/3. In Mus musculus (Mouse), this protein is Probable imidazolonepropionase (Amdhd1).